A 140-amino-acid chain; its full sequence is Nucleoside diphosphate kinase (140 aa).

ATP contacts are provided by K11, F59, R87, T93, R104, and N114. H117 functions as the Pros-phosphohistidine intermediate in the catalytic mechanism.

The protein belongs to the NDK family. Homotetramer. Mg(2+) serves as cofactor.

It localises to the cytoplasm. The enzyme catalyses a 2'-deoxyribonucleoside 5'-diphosphate + ATP = a 2'-deoxyribonucleoside 5'-triphosphate + ADP. It carries out the reaction a ribonucleoside 5'-diphosphate + ATP = a ribonucleoside 5'-triphosphate + ADP. Functionally, major role in the synthesis of nucleoside triphosphates other than ATP. The ATP gamma phosphate is transferred to the NDP beta phosphate via a ping-pong mechanism, using a phosphorylated active-site intermediate. The sequence is that of Nucleoside diphosphate kinase from Rickettsia akari (strain Hartford).